Here is a 433-residue protein sequence, read N- to C-terminus: 2,2-dialkylglycine decarboxylase (433 aa).

Position 272 is an N6-(pyridoxal phosphate)lysine (Lys-272).

It belongs to the class-III pyridoxal-phosphate-dependent aminotransferase family. Homotetramer. Pyridoxal 5'-phosphate serves as cofactor.

The catalysed reaction is 2,2-dialkylglycine + pyruvate + H(+) = dialkyl ketone + L-alanine + CO2. The dialkylglycine decarboxylase is of interest because it normally catalyzes both decarboxylation and amino transfer. It may be more properly described as a decarboxylating aminotransferase rather than an aminotransferring decarboxylase. This Burkholderia cepacia (Pseudomonas cepacia) protein is 2,2-dialkylglycine decarboxylase (dgdA).